We begin with the raw amino-acid sequence, 75 residues long: UPF0346 protein OB1736 (75 aa).

It belongs to the UPF0346 family.

The protein is UPF0346 protein OB1736 of Oceanobacillus iheyensis (strain DSM 14371 / CIP 107618 / JCM 11309 / KCTC 3954 / HTE831).